The following is a 205-amino-acid chain: E3 ubiquitin-protein ligase complex slx8-rfp subunit rfp2 (205 aa).

Residues 147–190 form an RING-type; degenerate zinc finger; sequence CAKCGNELVSDEKKSIFAAKCGHLFCSTCAKELRKKTVPCPVQH.

As to quaternary structure, part of an E3 ubiquitin complex including rfp1, rfp2 and slx8. Interacts with slx8.

It localises to the nucleus. It carries out the reaction S-ubiquitinyl-[E2 ubiquitin-conjugating enzyme]-L-cysteine + [acceptor protein]-L-lysine = [E2 ubiquitin-conjugating enzyme]-L-cysteine + N(6)-ubiquitinyl-[acceptor protein]-L-lysine.. It participates in protein modification; protein ubiquitination. Mediates ubiquitination and subsequent desumoylation/degradation of sumoylated proteins and proteins containing SUMO-like domains. Involved in maintaining genome stability where it acts in the cellular response to DNA damage. The protein is E3 ubiquitin-protein ligase complex slx8-rfp subunit rfp2 (rfp2) of Schizosaccharomyces pombe (strain 972 / ATCC 24843) (Fission yeast).